A 3131-amino-acid chain; its full sequence is MLEGLLANFLNRLLGEYIENFDATQLKVAVWNGDVTLRNLQLKRSAFRKLELPISVQYGLVEELTLKIPWSSLKNKPVEIYIVGIRALASMEENVKSQSEVDPHQVLESKRRQMQLWEASQIGKAETAYDPKTQTFTESLITRMIDNIQINIRDIHIRFEHLPVSNVVPGGYSFGLLLSEFSIESCNEEWTSTFVETESQTIYKLCSLRGFGIYSDETAECIDKTDINELMNTFQALITDFQSREKDYIIAPVTGMAKVTINKLPTPEIPRFLSQISFRGFDVSLNDSQISCGMSLAHELQDVMSKLAFRKRIVGNVSLDTPLDYLRFIFQKTLHDIQQKHYARSWPAIKAFCEKRRNYIKLYKKKFLAVQLSADESKELDVLELNLDISQLKLFRSLAYQEIKNEGFEPQPPKQQGWGSWMWNSFRGASDENGEVTDDQRKTVIDAIGLNDSIIESAHVGDLQSNTSLFDVRLEVPSGKFSLLKYPKKENVISLELLNFFSQFKCNKKDYSFVANLGSLKMYNDDRNFLYPRETSNKEIETTSPSIFTLSFERSSSDDNDTDTLGINLRALEFFYDPNLLLRVKGFQSSLFANDNGRKLVRLANDAVTDFTSQTVQNLQEYLNEKRKLNVNFQFQTPLLIFPEDCNNPESFSLFVDAGFISITSQNVETNDKESNSESETLYHLIYDRYRVSLESARLLLGPLNELKNESNKINEEYYLMNELNTEIFIQAQRVPTPQYPRIKVEGNMPCLSFILSDAQFRILNNLASTMLKDGKASDDDDNGDWRPESSESLDSHESEYKLNNTPSEQSVKVSHFFEFNMKLGEVTLILCREDSQTKRNSMVSVNFAKLLLSFNQFEDNSHLRMSINSFHINDMLSKSSRDNNRQLMRCYAPDSVDAENTPVIVEIKSVKAGENQSETNTTVDFLCANGDFYLAKFSILTLIEFLPSFAPPPSNDKQSTPQVSNSAAGKMELNFKIHKIGLRLLENYESKPICIDLLALDLSVNSTKGISEVESRVDKIQVMAWDHEKDEIVTLIDSKQDSLFDLKCKMQEGWFIHSPNPSTDVNIKMGSFTMLCHKQPIEEILNYASNFGHYKAIVQSVKYLAETGTHQVQQGTNVNINLYISNPIFQIPLTLENGSSAMVEILPGSFSLKTPSWLPNLTLNLESKSTTLRTIYYSKDFDEKGNQITVLDDLNISLDGSIVQAVDSAITNYAIDLHCGISELLIHLSQAQYLILLKLASNLPEMLSIANAFSANVDAPSVMTLLSEELYSIDTVNDAISNLSQNSSFDMKFGLHFPKISLNLYDGTFITPENSLSPLSNFTLNEIRAEGSYDLKTGASALIKMASLAIEDVRSEKSRYFSNVIIPSTDTESQLQVSFQYKPDTSSILLEGDIFKSMYVLSLDHLLSIYYWFGQPLMEKKLESPDDVQSLQAESSVSTPAVTAASEKSISLSVRFDIRNTSLVFVADASKSTSQAIVLRTDQISLVKQLSYSLTVQKMGMFVTRMDKLDDGIQILDDFDIGFGLVQDCSENKSFSATLDLDRLLFRISVYDLLLLQSIAQASVSVISSYKDKSSSISENMNSGDYGQQILNASNIAAVQQKAEQTATTLLTVLGHDSLISEEFTINSAGIQLILISDAHCLPVFDFTIENFNVLVKDWSTNLSATTSLTLHCNAFNFAKSHWEPVIEPWTFSTTAIMKDGMHEVNINSDDIAQISLTPMMVTDVHRLIKFYLTNQENNIEKRPEGYPYVILNQTGYNLSIQYGNLNSSEMQSLSLPSGKCVPCRFESKEVLTSRMSSKVQDVATKVRVSFDSTWYPVDEVSVHQEGSFLYELKPRIDQRTFLLVTVVLLESNIKQIILSSPYSIVNRTKEVIEVVCNDRSGHRQSSVIKIDPNETGYVPLDLACLYPLRIRPVSKLGFLWSNQIVDWHSLNKSPLQYLTCESTSTSWKHNLLVFARNLMDGSLQNDYPFLQLNILPTLQIENLLPYEINLRIIERSSGNDWRSSLSPGDSLPILHTDSKSFLLMGINVPDLDLQPVDLPIIYTPISSGQDVQTSALLTASDKQDVVKLILKYEKLPGTNYVSKVMIYPPYVIFNHTDLSIQVTSSSPNSIRYTIPSGSYSNDIKPYFYSFDESGRKNRAMISIDNGTSWSADIGFDTLGSSSQVEVRKTNESDVCLLGMSISESSGKFCLTKSVTFTPRFVFKNHLDCTVSLREFGSSKVLHLPSNELIPMMYFSNPQEIALLLSLPSSNNHWTSPFLAQNVGIVHLKAFEFDDDDNNMSTTLLRLCVTLEDATFFVTITKEDKAWPFRLKNCTSREICYEQKRPDPESVDSRFLQGSRSMKYALNPGEEANYSWDFPILKSKLLQVEVGKAIHDLDISSVGQLEPWHPTELDQKIRIHPEVKVDSLTSLVTFNEIDLSKPKLPSRTNSNVKGSIVEQKFKLVLQLKGFGISLIDKKYEEFAYATLKNFTFRFDDSKDLNTFGMSLGWLQIDNQMLDSVYPIALFPTMITQEVKQDDPQLLQLRFSVLKDSSFNILYIKYASLLLQELSLEVEDRLVLTLLQLLYPSSDVSKDSASLSKNAFADKFEIPDLDADVYRSNVFFETLHLQPTRLNISFETSYESDQPAVKSSNPTLDFMTGILISTLGNIHDAPVQLNSILLENARGTLSEMANRVASHYKQQVGYQIYKIAGRADFLGNPVGLFNNVASGVFDMFYEPYQGFLLQDSQSFGDSFARGTSSFMRKTIYGVSDSVSKITGTISKGLSTMTMDPKYQNSRRRFRSRNRPKEAVYGVTAGANSFYDSMSSGFKGLKKPFTDPKNNSAGKFLKGFGKGMLGLATKPAIGLLDMTSNVSEGIRNSTDVRTNPEIDKVRVPRYVEFGGLIVPFKPYESLGKYMLSCLDDGKYAFDEYLYHAEIQNVDILYISTKHFIITGSNYIVKIAVPVKQISGLRVSEHDLNSSCLFTFAVFWQRCESLFDCEYLSTPNLELFVKEKKKPIMSITMSDSSAYGEELMRERFEHLLKAYEKMALMVAEQEEFNAKIEDMALKLLSEKYDNEAYQAELFYRLSNCVEKVLHNKISITDLKTEYEEILEQTLKKECKAYERSCIENVKLKKRTEQATAYYASSSSEP.

A Chorein N-terminal domain is found at 2 to 115; it reads LEGLLANFLN…VLESKRRQMQ (114 aa). Residues 774 to 801 show a composition bias toward basic and acidic residues; that stretch reads DGKASDDDDNGDWRPESSESLDSHESEY. Residues 774–807 form a disordered region; sequence DGKASDDDDNGDWRPESSESLDSHESEYKLNNTP. Residues 2085-2363 enclose the SHR-BD domain; the sequence is KVMIYPPYVI…NYSWDFPILK (279 aa).

It belongs to the VPS13 family.

It localises to the golgi apparatus. It is found in the trans-Golgi network. Functionally, mediates the transfer of lipids between membranes at organelle contact sites. May play a role in mitochondrial lipid homeostasis, Golgi vesicle transport, reticulophagy, actin cytoskeleton organization and formation of the forespore membrane. The sequence is that of Intermembrane lipid transfer protein vps1302 from Schizosaccharomyces pombe (strain 972 / ATCC 24843) (Fission yeast).